Here is a 1755-residue protein sequence, read N- to C-terminus: Transposon Ty1-ML1 Gag-Pol polyprotein (1755 aa).

Polar residues-rich tracts occupy residues 1–23 (MESQ…SVTS), 48–60 (TKAN…TPAS), and 127–152 (QSQF…GNTF). 3 disordered regions span residues 1-88 (MESQ…YPQQ), 126-173 (PQSQ…RPPP), and 352-421 (GSRN…SKST). A compositionally biased stretch (low complexity) spans 153–165 (TDSSSADSDMTST). The segment at 299–401 (NNGIHINNKV…NSKSKTARAH (103 aa)) is RNA-binding. The span at 402–418 (NVSTSNNSPSTDNDSIS) shows a compositional bias: low complexity. Aspartate 461 (for protease activity; shared with dimeric partner) is an active-site residue. The integrase-type zinc finger-like stretch occupies residues 583–640 (NVHTSESTRKYPYPFIHRMLAHANAQTIRYSLKNNTITYFNESDVDWSSAIDYQCPDC). Positions 660 to 835 (NSYEPFQYLH…AGLDISTLLP (176 aa)) constitute an Integrase catalytic domain. 2 residues coordinate Mg(2+): aspartate 671 and aspartate 736. 3 disordered regions span residues 956-1087 (SKAV…ETEK), 1092-1111 (RSPS…NIVP), and 1130-1171 (DLPL…DSNA). The span at 960 to 969 (SPTDSTPPST) shows a compositional bias: low complexity. A compositionally biased stretch (polar residues) spans 1005 to 1015 (STPQISNIEST). Over residues 1038-1053 (ESSHASKSKDFRHSDS) the composition is skewed to basic and acidic residues. 2 stretches are compositionally biased toward polar residues: residues 1054–1082 (YSEN…QISD) and 1101–1111 (PENNSSHNIVP). Positions 1178-1212 (KKRSLEDNETEIKVSRDTWNTKNMRSLEPPRSKKR) match the Bipartite nuclear localization signal motif. One can recognise a Reverse transcriptase Ty1/copia-type domain in the interval 1338-1476 (NNYYITQLDI…DILGLEIKYQ (139 aa)). Residues aspartate 1346, aspartate 1427, aspartate 1428, aspartate 1610, glutamate 1652, and aspartate 1685 each contribute to the Mg(2+) site. The 143-residue stretch at 1610–1752 (DASYGNQPYY…IKTFKLLTNK (143 aa)) folds into the RNase H Ty1/copia-type domain.

In terms of assembly, the capsid protein forms a homotrimer, from which the VLPs are assembled. The protease is a homodimer, whose active site consists of two apposed aspartic acid residues. Post-translationally, initially, virus-like particles (VLPs) are composed of the structural unprocessed proteins Gag and Gag-Pol, and also contain the host initiator methionine tRNA (tRNA(i)-Met) which serves as a primer for minus-strand DNA synthesis, and a dimer of genomic Ty RNA. Processing of the polyproteins occurs within the particle and proceeds by an ordered pathway, called maturation. First, the protease (PR) is released by autocatalytic cleavage of the Gag-Pol polyprotein yielding capsid protein p45 and a Pol-p154 precursor protein. This cleavage is a prerequisite for subsequent processing of Pol-p154 at the remaining sites to release the mature structural and catalytic proteins. Maturation takes place prior to the RT reaction and is required to produce transposition-competent VLPs.

The protein localises to the cytoplasm. The protein resides in the nucleus. The enzyme catalyses DNA(n) + a 2'-deoxyribonucleoside 5'-triphosphate = DNA(n+1) + diphosphate. The catalysed reaction is Endonucleolytic cleavage to 5'-phosphomonoester.. In terms of biological role, capsid protein (CA) is the structural component of the virus-like particle (VLP), forming the shell that encapsulates the retrotransposons dimeric RNA genome. The particles are assembled from trimer-clustered units and there are holes in the capsid shells that allow for the diffusion of macromolecules. CA also has nucleocapsid-like chaperone activity, promoting primer tRNA(i)-Met annealing to the multipartite primer-binding site (PBS), dimerization of Ty1 RNA and initiation of reverse transcription. The aspartyl protease (PR) mediates the proteolytic cleavages of the Gag and Gag-Pol polyproteins after assembly of the VLP. Its function is as follows. Reverse transcriptase/ribonuclease H (RT) is a multifunctional enzyme that catalyzes the conversion of the retro-elements RNA genome into dsDNA within the VLP. The enzyme displays a DNA polymerase activity that can copy either DNA or RNA templates, and a ribonuclease H (RNase H) activity that cleaves the RNA strand of RNA-DNA heteroduplexes during plus-strand synthesis and hydrolyzes RNA primers. The conversion leads to a linear dsDNA copy of the retrotransposon that includes long terminal repeats (LTRs) at both ends. Functionally, integrase (IN) targets the VLP to the nucleus, where a subparticle preintegration complex (PIC) containing at least integrase and the newly synthesized dsDNA copy of the retrotransposon must transit the nuclear membrane. Once in the nucleus, integrase performs the integration of the dsDNA into the host genome. In Saccharomyces cerevisiae (strain ATCC 204508 / S288c) (Baker's yeast), this protein is Transposon Ty1-ML1 Gag-Pol polyprotein (TY1B-ML1).